A 208-amino-acid polypeptide reads, in one-letter code: Small ribosomal subunit protein eS8 (208 aa).

The disordered stretch occupies residues 1 to 27 (MGISRDNWHKRRRTGGKRKPVHKKRKY). The span at 8-26 (WHKRRRTGGKRKPVHKKRK) shows a compositional bias: basic residues.

It belongs to the eukaryotic ribosomal protein eS8 family. Component of the small ribosomal subunit. Identified in a IGF2BP1-dependent mRNP granule complex containing untranslated mRNAs. Part of the small subunit (SSU) processome, composed of more than 70 proteins and the RNA chaperone small nucleolar RNA (snoRNA) U3.

The protein localises to the cytoplasm. It localises to the membrane. It is found in the nucleus. Its subcellular location is the nucleolus. Its function is as follows. Component of the small ribosomal subunit. The ribosome is a large ribonucleoprotein complex responsible for the synthesis of proteins in the cell. Part of the small subunit (SSU) processome, first precursor of the small eukaryotic ribosomal subunit. During the assembly of the SSU processome in the nucleolus, many ribosome biogenesis factors, an RNA chaperone and ribosomal proteins associate with the nascent pre-rRNA and work in concert to generate RNA folding, modifications, rearrangements and cleavage as well as targeted degradation of pre-ribosomal RNA by the RNA exosome. In Danio rerio (Zebrafish), this protein is Small ribosomal subunit protein eS8 (rps8).